Here is a 316-residue protein sequence, read N- to C-terminus: Biotin synthase (316 aa).

A Radical SAM core domain is found at 42-268 (LCGESVDLCT…INPTAYIRMA (227 aa)). [4Fe-4S] cluster-binding residues include C60, C64, and C67. Positions 104, 136, 196, and 266 each coordinate [2Fe-2S] cluster.

The protein belongs to the radical SAM superfamily. Biotin synthase family. As to quaternary structure, homodimer. [4Fe-4S] cluster serves as cofactor. [2Fe-2S] cluster is required as a cofactor.

The catalysed reaction is (4R,5S)-dethiobiotin + (sulfur carrier)-SH + 2 reduced [2Fe-2S]-[ferredoxin] + 2 S-adenosyl-L-methionine = (sulfur carrier)-H + biotin + 2 5'-deoxyadenosine + 2 L-methionine + 2 oxidized [2Fe-2S]-[ferredoxin]. It participates in cofactor biosynthesis; biotin biosynthesis; biotin from 7,8-diaminononanoate: step 2/2. Its function is as follows. Catalyzes the conversion of dethiobiotin (DTB) to biotin by the insertion of a sulfur atom into dethiobiotin via a radical-based mechanism. The chain is Biotin synthase from Clostridium beijerinckii (strain ATCC 51743 / NCIMB 8052) (Clostridium acetobutylicum).